Consider the following 50-residue polypeptide: Sperm protamine P1 (50 aa).

This sequence belongs to the protamine P1 family. As to quaternary structure, cross-linked by interchain disulfide bonds around the DNA-helix. As to expression, testis.

It localises to the nucleus. Its subcellular location is the chromosome. Functionally, protamines substitute for histones in the chromatin of sperm during the haploid phase of spermatogenesis. They compact sperm DNA into a highly condensed, stable and inactive complex. This is Sperm protamine P1 (PRM1) from Saguinus imperator (Emperor tamarin).